The sequence spans 159 residues: Endoribonuclease YbeY (159 aa).

Positions 125, 129, and 135 each coordinate Zn(2+).

This sequence belongs to the endoribonuclease YbeY family. It depends on Zn(2+) as a cofactor.

It is found in the cytoplasm. Single strand-specific metallo-endoribonuclease involved in late-stage 70S ribosome quality control and in maturation of the 3' terminus of the 16S rRNA. This Enterococcus faecalis (strain ATCC 700802 / V583) protein is Endoribonuclease YbeY.